An 87-amino-acid chain; its full sequence is Large ribosomal subunit protein bL31B-2/bL31B-3 (87 aa).

This sequence belongs to the bacterial ribosomal protein bL31 family. Type B subfamily. In terms of assembly, part of the 50S ribosomal subunit.

This is Large ribosomal subunit protein bL31B-2/bL31B-3 (rpmE2-2) from Escherichia coli O157:H7.